The following is a 625-amino-acid chain: Coagulation factor XI (625 aa).

The N-terminal stretch at 1 to 18 (MIFLYQVVHFILFTSVSG) is a signal peptide. Apple domains lie at 20 to 103 (CVTQ…FKQC), 110 to 193 (CNKD…LKSC), 200 to 283 (CIRD…LQSC), and 291 to 374 (CHSS…LRLC). 17 disulfide bridges follow: Cys-20-Cys-103, Cys-46-Cys-76, Cys-50-Cys-56, Cys-110-Cys-193, Cys-136-Cys-165, Cys-140-Cys-146, Cys-200-Cys-283, Cys-226-Cys-255, Cys-230-Cys-236, Cys-291-Cys-374, Cys-317-Cys-346, Cys-321-Cys-327, Cys-380-Cys-500, Cys-416-Cys-432, Cys-514-Cys-581, Cys-545-Cys-560, and Cys-571-Cys-599. 2 N-linked (GlcNAc...) (complex) asparagine glycosylation sites follow: Asn-90 and Asn-126. An N-linked (GlcNAc...) (complex) asparagine; atypical glycan is attached at Asn-163. Residues 388-623 (IVGGTASVRG…YVDWILEKTQ (236 aa)) form the Peptidase S1 domain. His-431 (charge relay system) is an active-site residue. Asn-450 carries N-linked (GlcNAc...) (complex) asparagine glycosylation. Asp-480 (charge relay system) is an active-site residue. N-linked (GlcNAc...) (complex) asparagine glycosylation is present at Asn-491. 547–550 (KRYR) is a binding site for heparin. Ser-575 functions as the Charge relay system in the catalytic mechanism.

It belongs to the peptidase S1 family. Plasma kallikrein subfamily. In terms of assembly, homodimer; disulfide-linked. Can form non-covalently bonded homodimers. After activation the heavy and light chains are also linked by a disulfide bond. Interacts (activated) with F9 (inactive and activated) in calcium-dependent manner. Forms a heterodimer with SERPINA5. Interacts with Anopheles gambiae D7L2. Interacts (activated) with guianensin, an anticoagulant protein from Simulium guianense saliva. N-glycosylated on both chains. N-glycosylated sites mainly consist of nonfucosylated sialylated biantennary (in high abundance) and/or triantennary (in low abundance) complex structures. Glycosylation at Asn-163 uses a rare non-canonical Asn-X-Cys glycosite. Post-translationally, activated by factor XIIa (or XII), which cleaves each polypeptide after Arg-387 into the light chain, which contains the active site, and the heavy chain, which associates with high molecular weight (HMW) kininogen. Activated by F12 (activated); the presence of negatively charged surfaces accelerates activation. Activated by F2 (thrombin); the presence of negatively charged surfaces, such as polyphosphate and dextran sulfate, strongly accelerates activation. Autoactivated; the presence of negatively charged surfaces, such as polyphosphate and dextran sulfate, accelerates autoactivation and autolysis. As to expression, isoform 2 is produced by platelets and megakaryocytes but absent from other blood cells.

The protein resides in the secreted. It carries out the reaction Selective cleavage of Arg-|-Ala and Arg-|-Val bonds in factor IX to form factor IXa.. Inhibited by SERPINA5. Factor XI triggers the middle phase of the intrinsic pathway of blood coagulation by activating factor IX. The chain is Coagulation factor XI (F11) from Homo sapiens (Human).